The sequence spans 949 residues: Glycine dehydrogenase (decarboxylating) (949 aa).

Lys-699 carries the N6-(pyridoxal phosphate)lysine modification.

It belongs to the GcvP family. The glycine cleavage system is composed of four proteins: P, T, L and H. Requires pyridoxal 5'-phosphate as cofactor.

The catalysed reaction is N(6)-[(R)-lipoyl]-L-lysyl-[glycine-cleavage complex H protein] + glycine + H(+) = N(6)-[(R)-S(8)-aminomethyldihydrolipoyl]-L-lysyl-[glycine-cleavage complex H protein] + CO2. In terms of biological role, the glycine cleavage system catalyzes the degradation of glycine. The P protein binds the alpha-amino group of glycine through its pyridoxal phosphate cofactor; CO(2) is released and the remaining methylamine moiety is then transferred to the lipoamide cofactor of the H protein. This is Glycine dehydrogenase (decarboxylating) from Roseobacter denitrificans (strain ATCC 33942 / OCh 114) (Erythrobacter sp. (strain OCh 114)).